A 252-amino-acid polypeptide reads, in one-letter code: 5-oxoprolinase subunit A (252 aa).

The protein belongs to the LamB/PxpA family. As to quaternary structure, forms a complex composed of PxpA, PxpB and PxpC.

The enzyme catalyses 5-oxo-L-proline + ATP + 2 H2O = L-glutamate + ADP + phosphate + H(+). Catalyzes the cleavage of 5-oxoproline to form L-glutamate coupled to the hydrolysis of ATP to ADP and inorganic phosphate. This is 5-oxoprolinase subunit A from Bacillus cytotoxicus (strain DSM 22905 / CIP 110041 / 391-98 / NVH 391-98).